The primary structure comprises 352 residues: Chorismate synthase (352 aa).

NADP(+) is bound by residues R48 and R54. FMN is bound by residues 125–127, 238–239, G278, 293–297, and R319; these read RSS, NA, and KPTSS.

The protein belongs to the chorismate synthase family. Homotetramer. FMNH2 serves as cofactor.

The enzyme catalyses 5-O-(1-carboxyvinyl)-3-phosphoshikimate = chorismate + phosphate. The protein operates within metabolic intermediate biosynthesis; chorismate biosynthesis; chorismate from D-erythrose 4-phosphate and phosphoenolpyruvate: step 7/7. Its function is as follows. Catalyzes the anti-1,4-elimination of the C-3 phosphate and the C-6 proR hydrogen from 5-enolpyruvylshikimate-3-phosphate (EPSP) to yield chorismate, which is the branch point compound that serves as the starting substrate for the three terminal pathways of aromatic amino acid biosynthesis. This reaction introduces a second double bond into the aromatic ring system. This chain is Chorismate synthase, found in Bordetella petrii (strain ATCC BAA-461 / DSM 12804 / CCUG 43448).